The following is a 427-amino-acid chain: Glutamate-1-semialdehyde 2,1-aminomutase (427 aa).

Lys268 carries the post-translational modification N6-(pyridoxal phosphate)lysine.

This sequence belongs to the class-III pyridoxal-phosphate-dependent aminotransferase family. HemL subfamily. Requires pyridoxal 5'-phosphate as cofactor.

It localises to the cytoplasm. It carries out the reaction (S)-4-amino-5-oxopentanoate = 5-aminolevulinate. It participates in porphyrin-containing compound metabolism; protoporphyrin-IX biosynthesis; 5-aminolevulinate from L-glutamyl-tRNA(Glu): step 2/2. This Methanococcus vannielii (strain ATCC 35089 / DSM 1224 / JCM 13029 / OCM 148 / SB) protein is Glutamate-1-semialdehyde 2,1-aminomutase.